The following is a 642-amino-acid chain: MNIVKLQRKFPILTQEDLFSTIEKFRAIDLDDKGWVEKQQALEAVSKDGDATYDEARETLKHVGVDASGRVELDDYVGLVAKLRESKTGAAPQTTFNVAPNSTPIVSTAATGLQHKGKGTQAKIIVAGSQTGTTHTINEEERREFTKHINSVLAGDQDIGDLLPFPTDTFQLFDECRDGLVLSKLINDSVPDTIDTRVLNWPKKGKELNNFQASENANIVINSAKAIGCVVVNVHSEDIIEGREHLILGLIWQIIRRGLLSKIDIKLHPELYRLLEDDETLEQFLRLPPEQILLRWFNYHLKQANWNRRVTNFSKDVSDGENYTILLNQLDPALCSKAPLQTTDLMERAEQVLQNAEKLDCRKYLTPSSLVAGNPKLNLAFVAHLFNTHPGLEPIQEEEKPEIEEFDAEGEREARVFTLWLNSLDVDPPVISLFDDLKDGLILLQAYEKVMPGAVDFKHVNKRPASGAEISRFKALENTNYAVDLGRAKGFSLVGIEGSDIVDGNKLLTLGLVWQLMRRNISITMKTLSSSGRDMSDSQILKWAQDQVTKGGKNSTIRSFKDQALSNAHFLLDVLNGIAPGYVDYDLVTPGNTEEERYANARLAISIARKLGALIWLVPEDINEVRARLIITFIASLMTLNK.

2 EF-hand domains span residues 16-50 (EDLF…KDGD) and 51-86 (ATYD…LRES). Aspartate 29, aspartate 31, tryptophan 35, aspartate 66, serine 68, arginine 70, and aspartate 75 together coordinate Ca(2+). Actin-binding stretches follow at residues 125-394 (IVAG…GLEP) and 395-642 (IQEE…TLNK). 4 Calponin-homology (CH) domains span residues 139-259 (EEER…RRGL), 287-390 (LPPE…NTHP), 411-521 (EREA…RRNI), and 534-642 (DMSD…TLNK).

Its function is as follows. Binds to actin, and functionally associates with actin structures involved in the development and maintenance of cell polarity. The polypeptide is Fimbrin (SAC6) (Saccharomyces cerevisiae (strain ATCC 204508 / S288c) (Baker's yeast)).